Here is a 233-residue protein sequence, read N- to C-terminus: Large ribosomal subunit protein uL1 (233 aa).

Belongs to the universal ribosomal protein uL1 family. In terms of assembly, part of the 50S ribosomal subunit.

In terms of biological role, binds directly to 23S rRNA. The L1 stalk is quite mobile in the ribosome, and is involved in E site tRNA release. Functionally, protein L1 is also a translational repressor protein, it controls the translation of the L11 operon by binding to its mRNA. This Shewanella loihica (strain ATCC BAA-1088 / PV-4) protein is Large ribosomal subunit protein uL1.